Consider the following 438-residue polypeptide: DNA primase small subunit (438 aa).

Active-site residues include Glu63, Asp127, and Asp129. Positions 139-149 (CCSGAGVCLKC) match the Zinc knuckle motif motif.

It belongs to the eukaryotic-type primase small subunit family. Heterodimer of a catalytic subunit Prim1 and a regulatory subunit Prim2, also known as the DNA primase complex. Component of the alpha DNA polymerase complex (also known as the alpha DNA polymerase-primase complex) consisting of four subunits: the catalytic subunit PolA1, the regulatory subunit PolA2, and the primase complex subunits Prim1 and Prim2 respectively. PolA1 associates with the DNA primase complex before association with PolA2. Requires Mg(2+) as cofactor. The cofactor is Mn(2+). In terms of tissue distribution, expressed in embryos (at protein level).

The presence of the regulatory subunit Prim2 accelerates the kinetics of initiation and primer extension. In terms of biological role, catalytic subunit of the DNA primase complex and component of the DNA polymerase alpha complex (also known as the alpha DNA polymerase-primase complex) which play an essential role in the initiation of DNA synthesis. During the S phase of the cell cycle, the DNA polymerase alpha complex (composed of a catalytic subunit PolA1, an accessory subunit PolA2 and two primase subunits, the catalytic subunit Prim1 and the regulatory subunit Prim2) is recruited to DNA at the replicative forks. The primase subunit of the polymerase alpha complex initiates DNA synthesis by oligomerising short RNA primers on both leading and lagging strands. These primers are initially extended by the polymerase alpha catalytic subunit and subsequently transferred to polymerase delta and polymerase epsilon for processive synthesis on the lagging and leading strand, respectively. In the primase complex, both subunits are necessary for the initial di-nucleotide formation, but the extension of the primer depends only on the catalytic subunit. Can add both ribo- and deoxynucleotides during elongation of the primers. Binds single stranded DNA. The protein is DNA primase small subunit of Drosophila melanogaster (Fruit fly).